A 231-amino-acid chain; its full sequence is NADH-ubiquinone oxidoreductase chain 4 (231 aa).

A run of 6 helical transmembrane segments spans residues 1-21 (PIAGSMVLAAILLKLGGYGII), 34-54 (MFLPLVVLALWGAVLANLTCL), 63-85 (IAYSSISHMGLVAAAIIIQTPWG), 89-111 (GMTLMIAHGFTSSALFCLANTTY), 118-138 (ILILTRGFHNILPMATTWWLL), and 156-176 (LLIMSALFNWCPTTIIMLGLS).

Belongs to the complex I subunit 4 family.

The protein resides in the mitochondrion membrane. It catalyses the reaction a ubiquinone + NADH + 5 H(+)(in) = a ubiquinol + NAD(+) + 4 H(+)(out). Core subunit of the mitochondrial membrane respiratory chain NADH dehydrogenase (Complex I) that is believed to belong to the minimal assembly required for catalysis. Complex I functions in the transfer of electrons from NADH to the respiratory chain. The immediate electron acceptor for the enzyme is believed to be ubiquinone. The protein is NADH-ubiquinone oxidoreductase chain 4 (MT-ND4) of Calloselasma rhodostoma (Malayan pit viper).